An 815-amino-acid chain; its full sequence is Phosphatidylinositol 4-phosphate 5-kinase 9 (815 aa).

MORN repeat units follow at residues 58–80 (YSGS…DGCV), 81–103 (YDGE…SGAS), 104–126 (YDGE…NKLT), 127–149 (YKGR…NGDV), 150–172 (FEGS…NKNV), 173–195 (YLGD…TGDS), 196–218 (YEGS…DGGC), and 219–240 (YVGT…AGTR). The region spanning 391–809 (GHRSYDLMLS…RFLEFIKKVF (419 aa)) is the PIPK domain. The tract at residues 769–790 (YNMTKKIEHAYKSLHFDSLSIS) is activation loop.

Interacts with CINV1. As to expression, widely expressed.

It localises to the membrane. It is found in the nucleus. It carries out the reaction a 1,2-diacyl-sn-glycero-3-phospho-(1D-myo-inositol 4-phosphate) + ATP = a 1,2-diacyl-sn-glycero-3-phospho-(1D-myo-inositol-4,5-bisphosphate) + ADP + H(+). Its function is as follows. Plays a role in sugar-mediated root development. Interaction with CINV1 induces repression of CINV1 activity and negative regulation of sugar-mediated root cell elongation. The chain is Phosphatidylinositol 4-phosphate 5-kinase 9 (PIP5K9) from Arabidopsis thaliana (Mouse-ear cress).